The primary structure comprises 242 residues: MAGHSKWANIKHKKAAADAKRGKIWTRLIKEIQVAARLGGGDVNSNPRLRLAVDKAADANMPKDNVKRAIDRGVGGADGANYEEIRYEGYGIGGAAIIVDTLTDNRTRTVAEVRHAFSKFGGNMGTDGSVAFMFDHVGQFLFAPGTSEDALMEAALEAGANDVNTNDDGSIEVLCDWQEFSKVKDALEAAGFKAELAEVTMKPQNEVDFTGEDAVKMQKLLDALENLDDVQEVYTNAVVVEE.

It belongs to the TACO1 family.

It localises to the cytoplasm. The sequence is that of Probable transcriptional regulatory protein BURPS1710b_1385 from Burkholderia pseudomallei (strain 1710b).